A 188-amino-acid polypeptide reads, in one-letter code: Elongation factor P (188 aa).

The protein belongs to the elongation factor P family.

The protein resides in the cytoplasm. It participates in protein biosynthesis; polypeptide chain elongation. Involved in peptide bond synthesis. Stimulates efficient translation and peptide-bond synthesis on native or reconstituted 70S ribosomes in vitro. Probably functions indirectly by altering the affinity of the ribosome for aminoacyl-tRNA, thus increasing their reactivity as acceptors for peptidyl transferase. The protein is Elongation factor P of Flavobacterium johnsoniae (strain ATCC 17061 / DSM 2064 / JCM 8514 / BCRC 14874 / CCUG 350202 / NBRC 14942 / NCIMB 11054 / UW101) (Cytophaga johnsonae).